We begin with the raw amino-acid sequence, 214 residues long: DNA-directed RNA polymerase subunit alpha (214 aa).

Belongs to the RNA polymerase alpha chain family. In plastids the minimal PEP RNA polymerase catalytic core is composed of four subunits: alpha, beta, beta', and beta''. When a (nuclear-encoded) sigma factor is associated with the core the holoenzyme is formed, which can initiate transcription.

The protein localises to the plastid. The protein resides in the chloroplast. It catalyses the reaction RNA(n) + a ribonucleoside 5'-triphosphate = RNA(n+1) + diphosphate. DNA-dependent RNA polymerase catalyzes the transcription of DNA into RNA using the four ribonucleoside triphosphates as substrates. This is DNA-directed RNA polymerase subunit alpha (rpoA) from Euglena viridis (Cercaria viridis).